Consider the following 96-residue polypeptide: Aspartyl/glutamyl-tRNA(Asn/Gln) amidotransferase subunit C (96 aa).

Belongs to the GatC family. Heterotrimer of A, B and C subunits.

It catalyses the reaction L-glutamyl-tRNA(Gln) + L-glutamine + ATP + H2O = L-glutaminyl-tRNA(Gln) + L-glutamate + ADP + phosphate + H(+). The catalysed reaction is L-aspartyl-tRNA(Asn) + L-glutamine + ATP + H2O = L-asparaginyl-tRNA(Asn) + L-glutamate + ADP + phosphate + 2 H(+). Allows the formation of correctly charged Asn-tRNA(Asn) or Gln-tRNA(Gln) through the transamidation of misacylated Asp-tRNA(Asn) or Glu-tRNA(Gln) in organisms which lack either or both of asparaginyl-tRNA or glutaminyl-tRNA synthetases. The reaction takes place in the presence of glutamine and ATP through an activated phospho-Asp-tRNA(Asn) or phospho-Glu-tRNA(Gln). This is Aspartyl/glutamyl-tRNA(Asn/Gln) amidotransferase subunit C from Acaryochloris marina (strain MBIC 11017).